Consider the following 353-residue polypeptide: S-adenosylmethionine:tRNA ribosyltransferase-isomerase (353 aa).

This sequence belongs to the QueA family. In terms of assembly, monomer.

Its subcellular location is the cytoplasm. The enzyme catalyses 7-aminomethyl-7-carbaguanosine(34) in tRNA + S-adenosyl-L-methionine = epoxyqueuosine(34) in tRNA + adenine + L-methionine + 2 H(+). The protein operates within tRNA modification; tRNA-queuosine biosynthesis. Its function is as follows. Transfers and isomerizes the ribose moiety from AdoMet to the 7-aminomethyl group of 7-deazaguanine (preQ1-tRNA) to give epoxyqueuosine (oQ-tRNA). In Nitrosomonas europaea (strain ATCC 19718 / CIP 103999 / KCTC 2705 / NBRC 14298), this protein is S-adenosylmethionine:tRNA ribosyltransferase-isomerase.